Reading from the N-terminus, the 161-residue chain is Protein-export protein SecB (161 aa).

Belongs to the SecB family. Homotetramer, a dimer of dimers. One homotetramer interacts with 1 SecA dimer.

The protein resides in the cytoplasm. Functionally, one of the proteins required for the normal export of preproteins out of the cell cytoplasm. It is a molecular chaperone that binds to a subset of precursor proteins, maintaining them in a translocation-competent state. It also specifically binds to its receptor SecA. The polypeptide is Protein-export protein SecB (Pseudomonas putida (strain ATCC 700007 / DSM 6899 / JCM 31910 / BCRC 17059 / LMG 24140 / F1)).